The sequence spans 208 residues: Ribosomal RNA small subunit methyltransferase G (208 aa).

Residues Gly74, Leu79, 125-126, and Arg140 each bind S-adenosyl-L-methionine; that span reads VE.

Belongs to the methyltransferase superfamily. RNA methyltransferase RsmG family.

It localises to the cytoplasm. The enzyme catalyses guanosine(527) in 16S rRNA + S-adenosyl-L-methionine = N(7)-methylguanosine(527) in 16S rRNA + S-adenosyl-L-homocysteine. Specifically methylates the N7 position of guanine in position 527 of 16S rRNA. The sequence is that of Ribosomal RNA small subunit methyltransferase G from Shewanella denitrificans (strain OS217 / ATCC BAA-1090 / DSM 15013).